The following is a 283-amino-acid chain: Pantothenate synthetase (283 aa).

Met-30–His-37 contacts ATP. Residue His-37 is the Proton donor of the active site. (R)-pantoate is bound at residue Gln-61. Gln-61 provides a ligand contact to beta-alanine. An ATP-binding site is contributed by Gly-149–Asp-152. A (R)-pantoate-binding site is contributed by Gln-155. Leu-186 to Arg-189 is an ATP binding site.

It belongs to the pantothenate synthetase family. In terms of assembly, homodimer.

It is found in the cytoplasm. It catalyses the reaction (R)-pantoate + beta-alanine + ATP = (R)-pantothenate + AMP + diphosphate + H(+). Its pathway is cofactor biosynthesis; (R)-pantothenate biosynthesis; (R)-pantothenate from (R)-pantoate and beta-alanine: step 1/1. In terms of biological role, catalyzes the condensation of pantoate with beta-alanine in an ATP-dependent reaction via a pantoyl-adenylate intermediate. The polypeptide is Pantothenate synthetase (Escherichia coli O17:K52:H18 (strain UMN026 / ExPEC)).